The chain runs to 169 residues: Succinate dehydrogenase cytochrome b560 subunit, mitochondrial (169 aa).

The N-terminal 29 residues, 1-29, are a transit peptide targeting the mitochondrion; it reads MAALLLRHVGRHCLRAHFSPQLCIRNAVP. The Mitochondrial matrix portion of the chain corresponds to 30–65; it reads LGTTAKEEMERFWNKNIGSNRPLSPHITIYSWSLPM. Residues 66–90 form a helical membrane-spanning segment; that stretch reads AMSICHRGTGIALSAGVSLFGMSAL. Topologically, residues 91–110 are mitochondrial intermembrane; that stretch reads LLPGNFESYLELVKSLCLGP. A helical transmembrane segment spans residues 111–139; the sequence is ALIHTAKFALVFPLMYHTWNGIRHLMWDL. Residue His127 participates in heme b binding. Residues 140 to 146 lie on the Mitochondrial matrix side of the membrane; that stretch reads GKGLKIP. The helical transmembrane segment at 147–167 threads the bilayer; that stretch reads QLYQSGVVVLVLTVLSSMGLA. Residues 168 to 169 are Mitochondrial intermembrane-facing; it reads AM.

This sequence belongs to the cytochrome b560 family. In terms of assembly, component of complex II composed of four subunits: the flavoprotein (FP) SDHA, iron-sulfur protein (IP) SDHB, and a cytochrome b560 composed of SDHC and SDHD. Heme b is required as a cofactor.

The protein localises to the mitochondrion inner membrane. The protein operates within carbohydrate metabolism; tricarboxylic acid cycle. In terms of biological role, membrane-anchoring subunit of succinate dehydrogenase (SDH) that is involved in complex II of the mitochondrial electron transport chain and is responsible for transferring electrons from succinate to ubiquinone (coenzyme Q). SDH also oxidizes malate to the non-canonical enol form of oxaloacetate, enol-oxaloacetate. Enol-oxaloacetate, which is a potent inhibitor of the succinate dehydrogenase activity, is further isomerized into keto-oxaloacetate. The protein is Succinate dehydrogenase cytochrome b560 subunit, mitochondrial (SDHC) of Homo sapiens (Human).